Reading from the N-terminus, the 552-residue chain is FERRY endosomal RAB5 effector complex subunit 3 (552 aa).

The interval 383–403 (LKESLDSGNQNGGNDDKTKNA) is disordered.

As to quaternary structure, component of the FERRY complex composed of five subunits, TBCK, PPP1R21, FERRY3, CRYZL1 and GATD1 with a ratio of 1:2:1:2:4, respectively.

The protein localises to the cytoplasm. It localises to the early endosome. Functionally, component of the FERRY complex (Five-subunit Endosomal Rab5 and RNA/ribosome intermediary). The FERRY complex directly interacts with mRNAs and RAB5A, and functions as a RAB5A effector involved in the localization and the distribution of specific mRNAs most likely by mediating their endosomal transport. The complex recruits mRNAs and ribosomes to early endosomes through direct mRNA-interaction. Plays a role in mast cell degranulation. The polypeptide is FERRY endosomal RAB5 effector complex subunit 3 (Pongo abelii (Sumatran orangutan)).